A 388-amino-acid chain; its full sequence is Putative N(4)-(beta-N-acetylglucosaminyl)-L-asparaginase GL17147 (388 aa).

A signal peptide spans 1–20 (MYKAQYLWLFGLVLISRSAT). 2 cysteine pairs are disulfide-bonded: C94–C99 and C193–C209. T240 (nucleophile) is an active-site residue. Substrate is bound by residues 268–271 (RVGD) and 291–294 (TGDG). C351 and C378 are disulfide-bonded.

The protein belongs to the Ntn-hydrolase family. Heterotetramer of two alpha and two beta chains arranged as a dimer of alpha/beta heterodimers. Cleaved into an alpha and beta chain by autocatalysis; this activates the enzyme. The N-terminal residue of the beta subunit is responsible for the nucleophile hydrolase activity.

The enzyme catalyses N(4)-(beta-N-acetyl-D-glucosaminyl)-L-asparagine + H2O = N-acetyl-beta-D-glucosaminylamine + L-aspartate + H(+). Its function is as follows. Cleaves the GlcNAc-Asn bond which joins oligosaccharides to the peptide of asparagine-linked glycoproteins. In Drosophila persimilis (Fruit fly), this protein is Putative N(4)-(beta-N-acetylglucosaminyl)-L-asparaginase GL17147.